Consider the following 171-residue polypeptide: Small ribosomal subunit protein mS25 (171 aa).

This sequence belongs to the mitochondrion-specific ribosomal protein mS25 family. In terms of assembly, component of the mitochondrial ribosome small subunit (28S) which comprises a 12S rRNA and about 30 distinct proteins.

It localises to the mitochondrion. This Mus musculus (Mouse) protein is Small ribosomal subunit protein mS25 (Mrps25).